The chain runs to 299 residues: Probable lipid kinase YegS (299 aa).

The 132-residue stretch at Ala-2 to Thr-133 folds into the DAGKc domain. ATP-binding positions include Thr-40, Gly-66–Glu-72, and Thr-95. Mg(2+) is bound by residues Leu-215, Asp-218, and Leu-220. Glu-271 (proton acceptor) is an active-site residue.

The protein belongs to the diacylglycerol/lipid kinase family. YegS lipid kinase subfamily. The cofactor is Mg(2+). Ca(2+) is required as a cofactor.

Its subcellular location is the cytoplasm. Probably phosphorylates lipids; the in vivo substrate is unknown. The chain is Probable lipid kinase YegS from Shigella flexneri.